The primary structure comprises 448 residues: Phosphoglucosamine mutase (448 aa).

The active-site Phosphoserine intermediate is the serine 102. The Mg(2+) site is built by serine 102, aspartate 242, aspartate 244, and aspartate 246. Serine 102 carries the phosphoserine modification.

The protein belongs to the phosphohexose mutase family. Mg(2+) serves as cofactor. In terms of processing, activated by phosphorylation.

It catalyses the reaction alpha-D-glucosamine 1-phosphate = D-glucosamine 6-phosphate. Functionally, catalyzes the conversion of glucosamine-6-phosphate to glucosamine-1-phosphate. In Brevibacillus brevis (strain 47 / JCM 6285 / NBRC 100599), this protein is Phosphoglucosamine mutase.